Here is a 1138-residue protein sequence, read N- to C-terminus: uncharacterized protein (1138 aa).

Residues 1–28 (MKLFPRSILIILVLSFALNLGLVTKTHA) form the signal peptide. 7 helical membrane passes run 331 to 351 (IVTA…LLAG), 359 to 379 (YINF…INIT), 392 to 412 (MIQW…SWVM), 494 to 514 (MLVS…AFMV), 520 to 540 (CMIS…MFLF), 554 to 574 (MISF…MFSV), and 699 to 719 (IKNI…MYNF). Gly residues predominate over residues 775–784 (DLKAGQGGGV). 3 disordered regions span residues 775 to 914 (DLKA…KGTG), 958 to 977 (GGGR…RTNA), and 995 to 1071 (ERDN…KQIR). Residues 801 to 830 (AASGGTSAPTVTTPTASSSVATSSPKTVSS) are compositionally biased toward low complexity. The segment covering 838–852 (TPPPAPSEAVSPPPA) has biased composition (pro residues). A compositionally biased stretch (polar residues) spans 854-869 (IRTSISTPAPQSNIET). Composition is skewed to basic and acidic residues over residues 875 to 888 (IIRD…KEID), 961 to 977 (RIRD…RTNA), 995 to 1032 (ERDN…RKEN), and 1058 to 1071 (LKEH…KQIR).

This sequence belongs to the TrbL/VirB6 family.

The protein localises to the cell membrane. This is an uncharacterized protein from Rickettsia felis (strain ATCC VR-1525 / URRWXCal2) (Rickettsia azadi).